A 278-amino-acid polypeptide reads, in one-letter code: Thiazole synthase (278 aa).

Residue K109 is the Schiff-base intermediate with DXP of the active site. 1-deoxy-D-xylulose 5-phosphate contacts are provided by residues G170, 197–198 (AG), and 219–220 (NT).

This sequence belongs to the ThiG family. Homotetramer. Forms heterodimers with either ThiH or ThiS.

The protein resides in the cytoplasm. The catalysed reaction is [ThiS sulfur-carrier protein]-C-terminal-Gly-aminoethanethioate + 2-iminoacetate + 1-deoxy-D-xylulose 5-phosphate = [ThiS sulfur-carrier protein]-C-terminal Gly-Gly + 2-[(2R,5Z)-2-carboxy-4-methylthiazol-5(2H)-ylidene]ethyl phosphate + 2 H2O + H(+). The protein operates within cofactor biosynthesis; thiamine diphosphate biosynthesis. Its function is as follows. Catalyzes the rearrangement of 1-deoxy-D-xylulose 5-phosphate (DXP) to produce the thiazole phosphate moiety of thiamine. Sulfur is provided by the thiocarboxylate moiety of the carrier protein ThiS. In vitro, sulfur can be provided by H(2)S. This Cupriavidus necator (strain ATCC 17699 / DSM 428 / KCTC 22496 / NCIMB 10442 / H16 / Stanier 337) (Ralstonia eutropha) protein is Thiazole synthase.